A 385-amino-acid polypeptide reads, in one-letter code: Deoxyguanosinetriphosphate triphosphohydrolase-like protein (385 aa).

Residues 62–197 (RLTHSLEVAQ…VSLADDIAYS (136 aa)) enclose the HD domain.

It belongs to the dGTPase family. Type 2 subfamily.

This is Deoxyguanosinetriphosphate triphosphohydrolase-like protein from Neorickettsia sennetsu (strain ATCC VR-367 / Miyayama) (Ehrlichia sennetsu).